A 159-amino-acid polypeptide reads, in one-letter code: MFLSGRDLVLLGVVKGHSNGAIQPAGVDLSVGEIESLADAGFLGEEDKIMPKGDRIQCEYGVCELEPGAYRLRFNEVVSIPPGHVGFCFPRSSLLRMGCYLGCAVWDPGYTGRGQAMLLVANPHGLRLEMGSRIAQLVVARVEGPLTSLYKGDYQGEGL.

This sequence belongs to the dCTP deaminase family. Archaeal dUTPase subfamily.

It carries out the reaction dUTP + H2O = dUMP + diphosphate + H(+). Its pathway is pyrimidine metabolism; dUMP biosynthesis; dUMP from dCTP (dUTP route): step 2/2. In terms of biological role, this enzyme is involved in nucleotide metabolism: it produces dUMP, the immediate precursor of thymidine nucleotides and it decreases the intracellular concentration of dUTP so that uracil cannot be incorporated into DNA. The sequence is that of Probable deoxyuridine 5'-triphosphate nucleotidohydrolase from Aeropyrum pernix (strain ATCC 700893 / DSM 11879 / JCM 9820 / NBRC 100138 / K1).